A 229-amino-acid polypeptide reads, in one-letter code: Endonuclease V (229 aa).

Mg(2+) contacts are provided by aspartate 43 and aspartate 111.

Belongs to the endonuclease V family. Mg(2+) is required as a cofactor.

Its subcellular location is the cytoplasm. The enzyme catalyses Endonucleolytic cleavage at apurinic or apyrimidinic sites to products with a 5'-phosphate.. DNA repair enzyme involved in the repair of deaminated bases. Selectively cleaves double-stranded DNA at the second phosphodiester bond 3' to a deoxyinosine leaving behind the intact lesion on the nicked DNA. This chain is Endonuclease V, found in Rippkaea orientalis (strain PCC 8801 / RF-1) (Cyanothece sp. (strain PCC 8801)).